Here is a 379-residue protein sequence, read N- to C-terminus: F420-dependent formate dehydrogenase subunit beta (379 aa).

2 4Fe-4S ferredoxin-type domains span residues 271 to 301 and 321 to 351; these read EKWK…CSLE and IRLS…YIFH. Cys280, Cys283, Cys286, Cys290, Cys330, Cys333, Cys336, and Cys340 together coordinate [4Fe-4S] cluster.

Belongs to the FrhB family. In terms of assembly, dimer of an alpha (FdhA) and a beta (FdhB) subunit. The cofactor is [4Fe-4S] cluster. FAD is required as a cofactor. Zn(2+) serves as cofactor.

It carries out the reaction oxidized coenzyme F420-(gamma-L-Glu)(n) + formate + 2 H(+) = reduced coenzyme F420-(gamma-L-Glu)(n) + CO2. Catalyzes the oxidation of formate to carbon dioxide, with coenzyme F420 as the electron acceptor. In Methanocaldococcus jannaschii (strain ATCC 43067 / DSM 2661 / JAL-1 / JCM 10045 / NBRC 100440) (Methanococcus jannaschii), this protein is F420-dependent formate dehydrogenase subunit beta (fdhB).